The following is a 505-amino-acid chain: Maturase K (505 aa).

This sequence belongs to the intron maturase 2 family. MatK subfamily.

The protein resides in the plastid. It localises to the chloroplast. Usually encoded in the trnK tRNA gene intron. Probably assists in splicing its own and other chloroplast group II introns. The protein is Maturase K of Silene otites (Spanish catchfly).